Reading from the N-terminus, the 327-residue chain is Alkanal monooxygenase beta chain (327 aa).

The protein belongs to the bacterial luciferase oxidoreductase family. As to quaternary structure, heterodimer of an alpha and a beta chain.

The enzyme catalyses a long-chain fatty aldehyde + FMNH2 + O2 = a long-chain fatty acid + hnu + FMN + H2O + 2 H(+). Functionally, light-emitting reaction in luminous bacteria. The specific role of the beta subunit is unknown, but it is absolutely required for bioluminescence activity. This is Alkanal monooxygenase beta chain (luxB) from Photorhabdus luminescens (Xenorhabdus luminescens).